A 342-amino-acid chain; its full sequence is RNA 3'-terminal phosphate cyclase (342 aa).

Residues glutamine 103 and 283–287 each bind ATP; that span reads YLADQ. Histidine 308 functions as the Tele-AMP-histidine intermediate in the catalytic mechanism.

Belongs to the RNA 3'-terminal cyclase family. Type 1 subfamily.

It is found in the cytoplasm. The enzyme catalyses a 3'-end 3'-phospho-ribonucleotide-RNA + ATP = a 3'-end 2',3'-cyclophospho-ribonucleotide-RNA + AMP + diphosphate. Catalyzes the conversion of 3'-phosphate to a 2',3'-cyclic phosphodiester at the end of RNA. The mechanism of action of the enzyme occurs in 3 steps: (A) adenylation of the enzyme by ATP; (B) transfer of adenylate to an RNA-N3'P to produce RNA-N3'PP5'A; (C) and attack of the adjacent 2'-hydroxyl on the 3'-phosphorus in the diester linkage to produce the cyclic end product. The biological role of this enzyme is unknown but it is likely to function in some aspects of cellular RNA processing. The chain is RNA 3'-terminal phosphate cyclase from Shigella dysenteriae serotype 1 (strain Sd197).